We begin with the raw amino-acid sequence, 29 residues long: Orphan peptide CllNtx (29 aa).

Post-translationally, contains 3 disulfide bonds. In terms of tissue distribution, expressed by the venom gland.

Its subcellular location is the secreted. In terms of biological role, may act as a toxin. The polypeptide is Orphan peptide CllNtx (Centruroides limpidus (Mexican scorpion)).